Consider the following 262-residue polypeptide: Type II pantothenate kinase (262 aa).

Residue 7–14 (DAGGSLVK) coordinates ATP. Glu-71 serves as the catalytic Proton acceptor. Residues Thr-101, 119–123 (GGLLT), and Tyr-135 each bind ATP.

The protein belongs to the type II pantothenate kinase family. Homodimer.

The protein resides in the cytoplasm. It catalyses the reaction (R)-pantothenate + ATP = (R)-4'-phosphopantothenate + ADP + H(+). The protein operates within cofactor biosynthesis; coenzyme A biosynthesis; CoA from (R)-pantothenate: step 1/5. Its function is as follows. Catalyzes the phosphorylation of pantothenate (Pan), the first step in CoA biosynthesis. The chain is Type II pantothenate kinase from Oceanobacillus iheyensis (strain DSM 14371 / CIP 107618 / JCM 11309 / KCTC 3954 / HTE831).